The chain runs to 611 residues: Probable potassium transport system protein Kup (611 aa).

13 helical membrane-spanning segments follow: residues 24 to 44 (LVFG…FLFL), 55 to 75 (VSLI…FLAM), 102 to 122 (VAVF…ECVI), 143 to 163 (LIAQ…LFLF), 175 to 195 (FGPV…ISVA), 218 to 238 (LLGF…EALF), 252 to 272 (AWGF…AYLL), 275 to 295 (TDVI…LYIP), 296 to 316 (FLLL…SGIF), 344 to 364 (IYIN…LLIF), 374 to 394 (YGLA…AIFL), 400 to 420 (LYMG…LSTV), and 423 to 443 (ITHG…IVII).

It belongs to the HAK/KUP transporter (TC 2.A.72) family.

The protein localises to the cell membrane. It catalyses the reaction K(+)(in) + H(+)(in) = K(+)(out) + H(+)(out). Its function is as follows. Transport of potassium into the cell. Likely operates as a K(+):H(+) symporter. This Methanospirillum hungatei JF-1 (strain ATCC 27890 / DSM 864 / NBRC 100397 / JF-1) protein is Probable potassium transport system protein Kup.